The chain runs to 226 residues: UPF0758 protein SPD_0975 (226 aa).

The region spanning 103 to 225 is the MPN domain; the sequence is SILSSQKLAK…YFSYREKTDL (123 aa). Residues His174, His176, and Asp187 each coordinate Zn(2+). The JAMM motif motif lies at 174-187; it reads HNHPSGAVAPSQND.

The protein belongs to the UPF0758 family.

This Streptococcus pneumoniae serotype 2 (strain D39 / NCTC 7466) protein is UPF0758 protein SPD_0975.